The sequence spans 156 residues: Small ribosomal subunit protein uS7 (156 aa).

Belongs to the universal ribosomal protein uS7 family. Part of the 30S ribosomal subunit. Contacts proteins S9 and S11.

In terms of biological role, one of the primary rRNA binding proteins, it binds directly to 16S rRNA where it nucleates assembly of the head domain of the 30S subunit. Is located at the subunit interface close to the decoding center, probably blocks exit of the E-site tRNA. This is Small ribosomal subunit protein uS7 from Lachnospira eligens (strain ATCC 27750 / DSM 3376 / VPI C15-48 / C15-B4) (Eubacterium eligens).